We begin with the raw amino-acid sequence, 335 residues long: Ketol-acid reductoisomerase (NADP(+)) (335 aa).

The KARI N-terminal Rossmann domain occupies 2-182; the sequence is VEMFYDKDAD…GCTRAGVIET (181 aa). NADP(+) is bound by residues 25 to 28, arginine 48, serine 51, and 83 to 86; these read YGSQ and DEIQ. The active site involves histidine 108. Residue glycine 134 coordinates NADP(+). A KARI C-terminal knotted domain is found at 183–328; the sequence is TFREETETDL…KKLRAMMPWL (146 aa). Mg(2+) contacts are provided by aspartate 191, glutamate 195, glutamate 227, and glutamate 231. Substrate is bound at residue serine 252.

Belongs to the ketol-acid reductoisomerase family. Mg(2+) is required as a cofactor.

The enzyme catalyses (2R)-2,3-dihydroxy-3-methylbutanoate + NADP(+) = (2S)-2-acetolactate + NADPH + H(+). The catalysed reaction is (2R,3R)-2,3-dihydroxy-3-methylpentanoate + NADP(+) = (S)-2-ethyl-2-hydroxy-3-oxobutanoate + NADPH + H(+). Its pathway is amino-acid biosynthesis; L-isoleucine biosynthesis; L-isoleucine from 2-oxobutanoate: step 2/4. It functions in the pathway amino-acid biosynthesis; L-valine biosynthesis; L-valine from pyruvate: step 2/4. Its function is as follows. Involved in the biosynthesis of branched-chain amino acids (BCAA). Catalyzes an alkyl-migration followed by a ketol-acid reduction of (S)-2-acetolactate (S2AL) to yield (R)-2,3-dihydroxy-isovalerate. In the isomerase reaction, S2AL is rearranged via a Mg-dependent methyl migration to produce 3-hydroxy-3-methyl-2-ketobutyrate (HMKB). In the reductase reaction, this 2-ketoacid undergoes a metal-dependent reduction by NADPH to yield (R)-2,3-dihydroxy-isovalerate. The chain is Ketol-acid reductoisomerase (NADP(+)) from Methanococcoides burtonii (strain DSM 6242 / NBRC 107633 / OCM 468 / ACE-M).